Reading from the N-terminus, the 387-residue chain is Carbamoyl phosphate synthase small chain (387 aa).

Residues 1-196 form a CPSase region; it reads MEGVLSQLAV…FSINKQKFLF (196 aa). Ser-51, Gly-245, and Gly-247 together coordinate L-glutamine. The Glutamine amidotransferase type-1 domain occupies 197-384; sequence HVVVYDFGVK…IKLIVSQKTT (188 aa). The active-site Nucleophile is the Cys-273. L-glutamine is bound by residues Leu-274, Gln-277, Asn-315, and Phe-318. Residues His-357 and Glu-359 contribute to the active site.

This sequence belongs to the CarA family. In terms of assembly, composed of two chains; the small (or glutamine) chain promotes the hydrolysis of glutamine to ammonia, which is used by the large (or ammonia) chain to synthesize carbamoyl phosphate. Tetramer of heterodimers (alpha,beta)4.

It catalyses the reaction hydrogencarbonate + L-glutamine + 2 ATP + H2O = carbamoyl phosphate + L-glutamate + 2 ADP + phosphate + 2 H(+). It carries out the reaction L-glutamine + H2O = L-glutamate + NH4(+). Its pathway is amino-acid biosynthesis; L-arginine biosynthesis; carbamoyl phosphate from bicarbonate: step 1/1. The protein operates within pyrimidine metabolism; UMP biosynthesis via de novo pathway; (S)-dihydroorotate from bicarbonate: step 1/3. In terms of biological role, small subunit of the glutamine-dependent carbamoyl phosphate synthetase (CPSase). CPSase catalyzes the formation of carbamoyl phosphate from the ammonia moiety of glutamine, carbonate, and phosphate donated by ATP, constituting the first step of 2 biosynthetic pathways, one leading to arginine and/or urea and the other to pyrimidine nucleotides. The small subunit (glutamine amidotransferase) binds and cleaves glutamine to supply the large subunit with the substrate ammonia. This Buchnera aphidicola subsp. Acyrthosiphon pisum (strain APS) (Acyrthosiphon pisum symbiotic bacterium) protein is Carbamoyl phosphate synthase small chain.